A 187-amino-acid polypeptide reads, in one-letter code: UPF0301 protein lpl0620 (187 aa).

The protein belongs to the UPF0301 (AlgH) family.

The sequence is that of UPF0301 protein lpl0620 from Legionella pneumophila (strain Lens).